The following is a 121-amino-acid chain: uncharacterized protein (121 aa).

The helical transmembrane segment at 9–29 threads the bilayer; that stretch reads LTILIASIYIIFFVNAAPTLY. The interval 91 to 121 is disordered; that stretch reads EELPTYPPTMTTPLETTPLDTSPPVLPSAIP. Residues 98 to 113 are compositionally biased toward low complexity; it reads PTMTTPLETTPLDTSP.

The protein resides in the host membrane. This is an uncharacterized protein from Alcelaphine herpesvirus 1 (strain C500) (AlHV-1).